A 349-amino-acid polypeptide reads, in one-letter code: 26S proteasome non-ATPase regulatory subunit 4 (349 aa).

In terms of domain architecture, VWFA spans 5–188; it reads ATIVCLDNSE…LSDIILQSPI (184 aa). A UIM 1 domain is found at 204–223; that stretch reads DTDPDLAMALKLSLEEEKQR. The span at 219–234 shows a compositional bias: basic and acidic residues; sequence EEKQRQERERKAREEA. Disordered stretches follow at residues 219-257 and 274-349; these read EEKQ…MDVN and TDKM…NEKK. A compositionally biased stretch (low complexity) spans 235-253; that stretch reads NGGSTNSGTTTTTAPTESN. In terms of domain architecture, UIM 2 spans 259–278; sequence EDDPELAEALALSMATDKME. Residues 280-301 are compositionally biased toward low complexity; it reads QSSTTNTDSQPPQQQQQPPTDD. Residues 335–349 show a composition bias toward basic and acidic residues; that stretch reads LSKKDEDKDKDNEKK.

This sequence belongs to the proteasome subunit S5A family. In terms of assembly, the 26S proteasome is composed of a core protease, known as the 20S proteasome, capped at one or both ends by the 19S regulatory complex (RC). The RC is composed of at least 18 different subunits in two subcomplexes, the base and the lid, which form the portions proximal and distal to the 20S proteolytic core, respectively.

Functionally, binds and presumably selects ubiquitin-conjugates for destruction. This chain is 26S proteasome non-ATPase regulatory subunit 4 (psmD4), found in Dictyostelium discoideum (Social amoeba).